Consider the following 373-residue polypeptide: Phospho-N-acetylmuramoyl-pentapeptide-transferase (373 aa).

The next 10 helical transmembrane spans lie at 34 to 54 (GALFTSALIVFLFGPRIISSL), 78 to 98 (TPTMGGLMILAGIVVSSLLWA), 100 to 120 (LANVYVVATLLVTLGFGAIGF), 141 to 161 (LGLEFIIAAIAVYFMMNTALS), 181 to 201 (FMLNLGMFFVLFGAFVIVSAG), 212 to 232 (GLAIVPVMIAAASFGVIAYLA), 252 to 272 (LAVVLGAVIGAGLGFLWFNAP), 275 to 295 (AIFMGDTGSLALGGLIGTVAV), 301 to 321 (IVMAIIGGLFVLEALSVIIQV), and 350 to 370 (QVVVRFWIVAVILAMIGLSTL).

It belongs to the glycosyltransferase 4 family. MraY subfamily. It depends on Mg(2+) as a cofactor.

It is found in the cell inner membrane. The catalysed reaction is UDP-N-acetyl-alpha-D-muramoyl-L-alanyl-gamma-D-glutamyl-meso-2,6-diaminopimeloyl-D-alanyl-D-alanine + di-trans,octa-cis-undecaprenyl phosphate = di-trans,octa-cis-undecaprenyl diphospho-N-acetyl-alpha-D-muramoyl-L-alanyl-D-glutamyl-meso-2,6-diaminopimeloyl-D-alanyl-D-alanine + UMP. The protein operates within cell wall biogenesis; peptidoglycan biosynthesis. Catalyzes the initial step of the lipid cycle reactions in the biosynthesis of the cell wall peptidoglycan: transfers peptidoglycan precursor phospho-MurNAc-pentapeptide from UDP-MurNAc-pentapeptide onto the lipid carrier undecaprenyl phosphate, yielding undecaprenyl-pyrophosphoryl-MurNAc-pentapeptide, known as lipid I. This chain is Phospho-N-acetylmuramoyl-pentapeptide-transferase, found in Rhizobium rhizogenes (strain K84 / ATCC BAA-868) (Agrobacterium radiobacter).